A 737-amino-acid chain; its full sequence is Amino-acid acetyltransferase, mitochondrial (737 aa).

The N-terminal 47 residues, 1-47 (MSRSTVLGWCTQSCRLLQKHDHSFSFPTFNGSPPLKKRRFCDSAAPA), are a transit peptide targeting the mitochondrion. The tract at residues 43–78 (SAAPAAPRPSIHRPSEYIPHSKSGGEAPQDLGHKAR) is disordered. Positions 558 to 727 (GEPALTLDDP…YEGVCRAIEP (170 aa)) constitute an N-acetyltransferase domain.

The protein belongs to the acetyltransferase family.

The protein resides in the mitochondrion. It carries out the reaction L-glutamate + acetyl-CoA = N-acetyl-L-glutamate + CoA + H(+). It functions in the pathway amino-acid biosynthesis; L-arginine biosynthesis; N(2)-acetyl-L-ornithine from L-glutamate: step 1/4. In terms of biological role, N-acetylglutamate synthase involved in arginine biosynthesis. In Coccidioides immitis (strain RS) (Valley fever fungus), this protein is Amino-acid acetyltransferase, mitochondrial (ARG2).